Reading from the N-terminus, the 872-residue chain is Facilitated trehalose transporter Tret1 (872 aa).

4 disordered regions span residues methionine 1 to lysine 40, valine 53 to serine 217, serine 262 to glutamine 281, and lysine 293 to isoleucine 315. The Cytoplasmic segment spans residues methionine 1–tyrosine 406. A compositionally biased stretch (gly residues) spans glycine 8–glycine 22. 3 stretches are compositionally biased toward low complexity: residues serine 55 to threonine 68, arginine 84 to arginine 98, and proline 121 to glutamine 132. Residues serine 262, serine 263, and serine 264 each carry the phosphoserine modification. Phosphoserine is present on residues serine 334 and serine 336. Positions phenylalanine 340–arginine 361 are disordered. Positions arginine 344–threonine 355 are enriched in polar residues. Residues isoleucine 407–valine 427 form a helical membrane-spanning segment. The Extracellular segment spans residues serine 428–serine 454. N-linked (GlcNAc...) asparagine glycosylation is present at asparagine 442. A helical transmembrane segment spans residues tryptophan 455–isoleucine 475. Residues glutamate 476–alanine 488 lie on the Cytoplasmic side of the membrane. A helical membrane pass occupies residues valine 489–leucine 509. Over glycine 510 to arginine 511 the chain is Extracellular. Residues phenylalanine 512 to threonine 532 form a helical membrane-spanning segment. Topologically, residues valine 533–arginine 538 are cytoplasmic. The chain crosses the membrane as a helical span at residues glycine 539–alanine 559. At glycine 560–serine 566 the chain is on the extracellular side. The helical transmembrane segment at methionine 567–proline 587 threads the bilayer. Topologically, residues glutamate 588–proline 650 are cytoplasmic. A helical membrane pass occupies residues leucine 651–phenylalanine 671. The Extracellular segment spans residues tyrosine 672–asparagine 687. Residues valine 688–isoleucine 708 traverse the membrane as a helical segment. Residues aspartate 709–lysine 714 are Cytoplasmic-facing. The helical transmembrane segment at isoleucine 715–phenylalanine 735 threads the bilayer. Over tyrosine 736–cysteine 755 the chain is Extracellular. Residues phenylalanine 756 to glycine 776 traverse the membrane as a helical segment. Residues glutamate 777–arginine 784 are Cytoplasmic-facing. The chain crosses the membrane as a helical span at residues glycine 785–threonine 803. The Extracellular segment spans residues lysine 804 to tyrosine 816. The helical transmembrane segment at glycine 817–valine 837 threads the bilayer. The Cytoplasmic segment spans residues proline 838–methionine 872. A phosphoserine mark is found at serine 860 and serine 861.

It belongs to the major facilitator superfamily. Sugar transporter (TC 2.A.1.1) family. Trehalose transporter subfamily.

Its subcellular location is the cell membrane. Functionally, low-capacity facilitative transporter for trehalose. Does not transport maltose, sucrose or lactose. Mediates the bidirectional transfer of trehalose. Responsible for the transport of trehalose synthesized in the fat body and the incorporation of trehalose into other tissues that require a carbon source, thereby regulating trehalose levels in the hemolymph. The sequence is that of Facilitated trehalose transporter Tret1 from Drosophila willistoni (Fruit fly).